The following is a 422-amino-acid chain: Protein arginine methyltransferase NDUFAF7, mitochondrial (422 aa).

Residues 1-28 constitute a mitochondrion transit peptide; it reads MRTLLRLKRLMPEVLWTKRSCSSSSINK.

It belongs to the NDUFAF7 family.

It is found in the mitochondrion. The enzyme catalyses L-arginyl-[protein] + 2 S-adenosyl-L-methionine = N(omega),N(omega)'-dimethyl-L-arginyl-[protein] + 2 S-adenosyl-L-homocysteine + 2 H(+). Arginine methyltransferase involved in the assembly or stability of mitochondrial NADH:ubiquinone oxidoreductase complex (complex I). Acts by mediating symmetric dimethylation of 'Arg-118' of ndufs2 after it assembles into the complex I, stabilizing the early intermediate complex. This Danio rerio (Zebrafish) protein is Protein arginine methyltransferase NDUFAF7, mitochondrial.